Consider the following 333-residue polypeptide: S-adenosylmethionine decarboxylase proenzyme (333 aa).

Phe7 contributes to the substrate binding site. Catalysis depends on residues Glu8 and Glu11. Substrate is bound at residue Glu67. Residue Ser68 is the Schiff-base intermediate with substrate; via pyruvic acid of the active site. Position 68 is a pyruvic acid (Ser); by autocatalysis (Ser68). Catalysis depends on Cys82, which acts as the Proton donor; for catalytic activity. Phe223 serves as a coordination point for substrate. Active-site proton acceptor; for processing activity residues include Ser229 and His243. A substrate-binding site is contributed by Glu247. Ser298 bears the Phosphoserine mark.

It belongs to the eukaryotic AdoMetDC family. Heterotetramer of two alpha and two beta chains. Requires pyruvate as cofactor. In terms of processing, is synthesized initially as an inactive proenzyme. Formation of the active enzyme involves a self-maturation process in which the active site pyruvoyl group is generated from an internal serine residue via an autocatalytic post-translational modification. Two non-identical subunits are generated from the proenzyme in this reaction, and the pyruvate is formed at the N-terminus of the alpha chain, which is derived from the carboxyl end of the proenzyme. The post-translation cleavage follows an unusual pathway, termed non-hydrolytic serinolysis, in which the side chain hydroxyl group of the serine supplies its oxygen atom to form the C-terminus of the beta chain, while the remainder of the serine residue undergoes an oxidative deamination to produce ammonia and the pyruvoyl group blocking the N-terminus of the alpha chain.

The enzyme catalyses S-adenosyl-L-methionine + H(+) = S-adenosyl 3-(methylsulfanyl)propylamine + CO2. The protein operates within amine and polyamine biosynthesis; S-adenosylmethioninamine biosynthesis; S-adenosylmethioninamine from S-adenosyl-L-methionine: step 1/1. Functionally, essential for biosynthesis of the polyamines spermidine and spermine. Promotes maintenance and self-renewal of embryonic stem cells, by maintaining spermine levels. The protein is S-adenosylmethionine decarboxylase proenzyme (Amd1) of Rattus norvegicus (Rat).